The primary structure comprises 141 residues: Large-conductance mechanosensitive channel (141 aa).

Transmembrane regions (helical) follow at residues 14 to 34 (VVDL…VNSL), 38 to 58 (VIMP…YYIP), and 82 to 102 (GQFL…FMVI).

It belongs to the MscL family. As to quaternary structure, homopentamer.

The protein resides in the cell inner membrane. Its function is as follows. Channel that opens in response to stretch forces in the membrane lipid bilayer. May participate in the regulation of osmotic pressure changes within the cell. In Methylorubrum extorquens (strain CM4 / NCIMB 13688) (Methylobacterium extorquens), this protein is Large-conductance mechanosensitive channel.